A 477-amino-acid chain; its full sequence is Pentatricopeptide repeat-containing protein At5g47360 (477 aa).

PPR repeat units lie at residues 129 to 163 (NVKT…NVCA), 164 to 198 (DTVA…GLYP), 199 to 233 (DVIT…DCVL), 234 to 264 (NSVT…MEKE), 273 to 307 (NAVT…GCMP), 308 to 343 (NRVT…GGVS), 344 to 378 (LSEC…GVRP), 379 to 413 (DGLA…DVKS), and 416 to 450 (DSDI…KMRL).

It belongs to the PPR family. P subfamily.

The protein is Pentatricopeptide repeat-containing protein At5g47360 of Arabidopsis thaliana (Mouse-ear cress).